Here is a 149-residue protein sequence, read N- to C-terminus: Transcriptional repressor NrdR (149 aa).

Residues 3–34 (CPFCSEQETKVIDSRLVAEGQQVRRRRECMVC) fold into a zinc finger. The 91-residue stretch at 49-139 (PRVIKRDGSR…VYRSFEDIRE (91 aa)) folds into the ATP-cone domain.

This sequence belongs to the NrdR family. The cofactor is Zn(2+).

In terms of biological role, negatively regulates transcription of bacterial ribonucleotide reductase nrd genes and operons by binding to NrdR-boxes. The chain is Transcriptional repressor NrdR from Alteromonas mediterranea (strain DSM 17117 / CIP 110805 / LMG 28347 / Deep ecotype).